A 1086-amino-acid chain; its full sequence is Lysine-specific demethylase 4B (1086 aa).

Positions Ile15–Arg57 constitute a JmjN domain. A 2-oxoglutarate-binding site is contributed by Tyr133. Residues Val146–Cys309 enclose the JmjC domain. Positions 189 and 191 each coordinate Fe cation. Asn199 and Lys207 together coordinate 2-oxoglutarate. Cys235 and His241 together coordinate Zn(2+). Lys242 contributes to the 2-oxoglutarate binding site. Residue His277 participates in Fe cation binding. Residues Cys307 and Cys309 each contribute to the Zn(2+) site. The segment covering Ser379 to Arg395 has biased composition (basic and acidic residues). Disordered stretches follow at residues Ser379–Ala536 and Pro575–Val624. The span at Ser401 to Lys410 shows a compositional bias: basic residues. A compositionally biased stretch (acidic residues) spans Met441–Leu450. A compositionally biased stretch (basic and acidic residues) spans His456 to Gly467. Positions Lys468–Thr480 are enriched in basic residues. Low complexity predominate over residues Gly512–Gly522. Polar residues predominate over residues Gln585–Phe597. At Lys599 the chain carries N6-acetyllysine. The segment at Met719–Ala777 adopts a PHD-type 1 zinc-finger fold. The C2HC pre-PHD-type zinc finger occupies Thr782–Val815. The segment at Leu838–Arg895 adopts a PHD-type 2 zinc-finger fold. 2 consecutive Tudor domains span residues Arg905–Leu962 and Gly963–Pro1019. The disordered stretch occupies residues Ser1024–Val1043. The segment covering Leu1026–Ser1037 has biased composition (polar residues).

This sequence belongs to the JHDM3 histone demethylase family. It depends on Fe(2+) as a cofactor.

The protein localises to the nucleus. The enzyme catalyses N(6),N(6),N(6)-trimethyl-L-lysyl(9)-[histone H3] + 2 2-oxoglutarate + 2 O2 = N(6)-methyl-L-lysyl(9)-[histone H3] + 2 formaldehyde + 2 succinate + 2 CO2. Functionally, histone demethylase that specifically demethylates 'Lys-9' of histone H3, thereby playing a role in histone code. Does not demethylate histone H3 'Lys-4', H3 'Lys-27', H3 'Lys-36' nor H4 'Lys-20'. Only able to demethylate trimethylated H3 'Lys-9', with a weaker activity than KDM4A, KDM4C and KDM4D. Demethylation of Lys residue generates formaldehyde and succinate. Plays a critical role in the development of the central nervous system (CNS). In Mus musculus (Mouse), this protein is Lysine-specific demethylase 4B (Kdm4b).